A 111-amino-acid chain; its full sequence is MRFSLALLALPALAAAAPVPGGGKGAGQACNSGPVQCCNETTTVANAQKQGLLGGLLGVVVGPITGLVGLNCSPISVVGVLTGNSCTAQTVCCDHVTQNGLVNVGCTPISL.

A signal peptide spans 1–25; the sequence is MRFSLALLALPALAAAAPVPGGGKG. Disulfide bonds link cysteine 30/cysteine 37, cysteine 38/cysteine 72, cysteine 86/cysteine 92, and cysteine 93/cysteine 106. Asparagine 39 carries an N-linked (GlcNAc...) asparagine glycan.

This sequence belongs to the fungal hydrophobin family. In terms of assembly, self-assembles to form functional amyloid fibrils called rodlets. Self-assembly into fibrillar rodlets occurs spontaneously at hydrophobic:hydrophilic interfaces and the rodlets further associate laterally to form amphipathic monolayers.

Its subcellular location is the secreted. It localises to the cell wall. In terms of biological role, aerial growth, conidiation, and dispersal of filamentous fungi in the environment rely upon a capability of their secreting small amphipathic proteins called hydrophobins (HPBs) with low sequence identity. Class I can self-assemble into an outermost layer of rodlet bundles on aerial cell surfaces, conferring cellular hydrophobicity that supports fungal growth, development and dispersal; whereas Class II form highly ordered films at water-air interfaces through intermolecular interactions but contribute nothing to the rodlet structure. SC4 is a dikaryon-specific class I hydrophobin that contributes to the formation of aerial hyphae and fruiting bodies. Plays a role within fruiting bodies by preventing gas channels filling with water under wet conditions, probably serving uninterrupted gas exchange. SC4 cannot fully substitute for SC3. Involved in the unusual characteristic of mounds to adhere to and completely envelop adjacent fruiting bodies on mosaic colonies. This chain is Class I hydrophobin SC4, found in Schizophyllum commune (Split gill fungus).